The chain runs to 82 residues: Large ribosomal subunit protein bL31B (82 aa).

The protein belongs to the bacterial ribosomal protein bL31 family. Type B subfamily. As to quaternary structure, part of the 50S ribosomal subunit.

The sequence is that of Large ribosomal subunit protein bL31B from Amoebophilus asiaticus (strain 5a2).